A 244-amino-acid polypeptide reads, in one-letter code: tRNA (guanine-N(7)-)-methyltransferase (244 aa).

Residues 1–10 are compositionally biased toward polar residues; sequence MSDTPQSPAQ. The disordered stretch occupies residues 1 to 20; it reads MSDTPQSPAQGSLAEHDEAR. The S-adenosyl-L-methionine site is built by Glu-74, Glu-99, Asp-126, and Asp-149. Asp-149 is a catalytic residue. Residues Lys-153, Asp-185, and 222 to 225 contribute to the substrate site; that span reads TKFE.

This sequence belongs to the class I-like SAM-binding methyltransferase superfamily. TrmB family.

It carries out the reaction guanosine(46) in tRNA + S-adenosyl-L-methionine = N(7)-methylguanosine(46) in tRNA + S-adenosyl-L-homocysteine. Its pathway is tRNA modification; N(7)-methylguanine-tRNA biosynthesis. Its function is as follows. Catalyzes the formation of N(7)-methylguanine at position 46 (m7G46) in tRNA. The sequence is that of tRNA (guanine-N(7)-)-methyltransferase from Pseudomonas aeruginosa (strain UCBPP-PA14).